The chain runs to 21 residues: Nucleoside diphosphate kinase (21 aa).

Catalysis depends on histidine 4, which acts as the Pros-phosphohistidine intermediate.

The protein belongs to the NDK family. In terms of assembly, homohexamer. Mg(2+) serves as cofactor.

The protein resides in the cytoplasm. It carries out the reaction a 2'-deoxyribonucleoside 5'-diphosphate + ATP = a 2'-deoxyribonucleoside 5'-triphosphate + ADP. The enzyme catalyses a ribonucleoside 5'-diphosphate + ATP = a ribonucleoside 5'-triphosphate + ADP. In terms of biological role, major role in the synthesis of nucleoside triphosphates other than ATP. The ATP gamma phosphate is transferred to the NDP beta phosphate via a ping-pong mechanism, using a phosphorylated active-site intermediate. This is Nucleoside diphosphate kinase (NDK1) from Candida albicans (Yeast).